A 495-amino-acid chain; its full sequence is Probable cytosol aminopeptidase (495 aa).

Mn(2+) contacts are provided by Lys258 and Asp263. Residue Lys270 is part of the active site. Residues Asp281, Asp340, and Glu342 each contribute to the Mn(2+) site. Arg344 is an active-site residue.

This sequence belongs to the peptidase M17 family. Requires Mn(2+) as cofactor.

It localises to the cytoplasm. It catalyses the reaction Release of an N-terminal amino acid, Xaa-|-Yaa-, in which Xaa is preferably Leu, but may be other amino acids including Pro although not Arg or Lys, and Yaa may be Pro. Amino acid amides and methyl esters are also readily hydrolyzed, but rates on arylamides are exceedingly low.. The enzyme catalyses Release of an N-terminal amino acid, preferentially leucine, but not glutamic or aspartic acids.. Presumably involved in the processing and regular turnover of intracellular proteins. Catalyzes the removal of unsubstituted N-terminal amino acids from various peptides. This Leptospira interrogans serogroup Icterohaemorrhagiae serovar Lai (strain 56601) protein is Probable cytosol aminopeptidase.